The following is a 677-amino-acid chain: Methionine--tRNA ligase (677 aa).

A 'HIGH' region motif is present at residues 15–25; that stretch reads PYANGSIHLGH. Positions 146, 149, 159, and 162 each coordinate Zn(2+). The 'KMSKS' region motif lies at 333-337; the sequence is KMSKS. Lys-336 serves as a coordination point for ATP. The region spanning 575 to 677 is the tRNA-binding domain; sequence DFAKVDLRVA…DGAKPGQQVK (103 aa).

Belongs to the class-I aminoacyl-tRNA synthetase family. MetG type 1 subfamily. In terms of assembly, homodimer. Requires Zn(2+) as cofactor.

Its subcellular location is the cytoplasm. It catalyses the reaction tRNA(Met) + L-methionine + ATP = L-methionyl-tRNA(Met) + AMP + diphosphate. Functionally, is required not only for elongation of protein synthesis but also for the initiation of all mRNA translation through initiator tRNA(fMet) aminoacylation. The protein is Methionine--tRNA ligase of Klebsiella pneumoniae (strain 342).